The sequence spans 356 residues: MHHQWLLLAACFWVIFMFMVASKFITLTFKDPDVYSAKQEFLFLTTMPEVRKLPEEKHIPEELKPTGKELPDSQLVQPLVYMERLELIRNVCRDDALKNLSHTPVSKFVLDRIFVCDKHKILFCQTPKVGNTQWKKVLIVLNGAFSSIEEIPENVVHDHEKNGLPRLSSFSDAEIQKRLKTYFKFFIVRDPFERLISAFKDKFVHNPRFEPWYRHEIAPGIIRKYRRNRTETRGIQFEDFVRYLGDPNHRWLDLQFGDHIIHWVTYVELCAPCEIMYSVIGHHETLEDDAPYILKEAGIDHLVSYPTIPPGITVYNRTKVEHYFLGISKRDIRRLYARFEGDFKLFGYQKPDFLLN.

The Cytoplasmic portion of the chain corresponds to 1–6 (MHHQWL). The chain crosses the membrane as a helical; Signal-anchor for type II membrane protein span at residues 7–27 (LLAACFWVIFMFMVASKFITL). Residues 28-356 (TFKDPDVYSA…GYQKPDFLLN (329 aa)) are Lumenal-facing. Residue Asn-99 is glycosylated (N-linked (GlcNAc...) asparagine). Residues 127-133 (PKVGNTQ) and 189-197 (RDPFERLIS) contribute to the 3'-phosphoadenylyl sulfate site. Asn-228 and Asn-316 each carry an N-linked (GlcNAc...) asparagine glycan.

Belongs to the sulfotransferase 2 family. As to expression, in fetal tissues, it is predominantly expressed in brain, and weakly expressed in lung, kidney and liver. In adult, it is highly expressed in brain, testis, ovary, expressed at intermediate level in heart, pancreas, skeletal muscle, spleen and thymus, and weakly expressed in other tissues. In brain, it is expressed at higher level in the frontal lobe.

The protein localises to the golgi apparatus membrane. It carries out the reaction 3-O-{beta-D-GlcA-(1-&gt;[3)-alpha-D-Xyl-(1-&gt;3)-beta-D-GlcA-(1-&gt;](n)-4)-beta-D-Xyl-(1-&gt;4)-Rib-ol-P-Rib-ol-P-3-beta-D-GalNAc-(1-&gt;3)-beta-D-GlcNAc-(1-&gt;4)-O-6-P-alpha-D-Man}-L-Thr-[protein] + 3'-phosphoadenylyl sulfate = 3-O-{O-3-S-beta-D-GlcA-(1-&gt;[3)-alpha-D-Xyl-(1-&gt;3)-beta-D-GlcA-(1-&gt;](n)-4)-beta-D-Xyl-(1-&gt;4)-Rib-ol-P-Rib-ol-P-3-beta-D-GalNAc-(1-&gt;3)-beta-D-GlcNAc-(1-&gt;4)-O-6-P-alpha-D-Man}-L-Thr-[protein] + adenosine 3',5'-bisphosphate + H(+). The catalysed reaction is 17beta-estradiol 3-O-(beta-D-glucuronate) + 3'-phosphoadenylyl sulfate = 17beta-estradiol 3-O-(3-sulfo-beta-D-glucuronate) + adenosine 3',5'-bisphosphate + H(+). It catalyses the reaction 17beta-estradiol 3-O-(beta-D-glucuronate) 17-sulfate + 3'-phosphoadenylyl sulfate = 17beta-estradiol 3-O-(3-sulfo-beta-D-glucuronate) 17-sulfate + adenosine 3',5'-bisphosphate + H(+). The enzyme catalyses 17beta-estradiol 17-O-(beta-D-glucuronate) + 3'-phosphoadenylyl sulfate = 17beta-estradiol 17-O-(3-sulfo-beta-D-glucuronate) + adenosine 3',5'-bisphosphate + H(+). It carries out the reaction 16alpha,17beta-estriol 3-O-(beta-D-glucuronate) + 3'-phosphoadenylyl sulfate = 16alpha,17beta-estriol 3-O-(3-sulfo-beta-D-glucuronate) + adenosine 3',5'-bisphosphate + H(+). The catalysed reaction is 16alpha,17beta-estriol 16-O-(beta-D-glucuronate) + 3'-phosphoadenylyl sulfate = 16alpha,17beta-estriol 16-O-(3-sulfo-beta-D-glucuronate) + adenosine 3',5'-bisphosphate + H(+). It catalyses the reaction 16alpha,17beta-estriol 17-O-(beta-D-glucuronate) + 3'-phosphoadenylyl sulfate = 16alpha,17beta-estriol 17-O-(3-sulfo-beta-D-glucuronate) + adenosine 3',5'-bisphosphate + H(+). The enzyme catalyses estrone 3-O-(beta-D-glucuronate) + 3'-phosphoadenylyl sulfate = estrone 3-O-(3-sulfo-beta-D-glucuronate) + adenosine 3',5'-bisphosphate + H(+). It carries out the reaction 3alpha,20alpha-dihydroxy-5beta-pregnane 3-O-(beta-D-glucuronate) + 3'-phosphoadenylyl sulfate = 3alpha,20alpha-dihydroxy-5beta-pregnane 3-O-(3-sulfo-beta-D-glucuronate) + adenosine 3',5'-bisphosphate + H(+). The catalysed reaction is testosterone 17-O-(beta-D-glucuronate) + 3'-phosphoadenylyl sulfate = testosterone 17-O-(3-sulfo-beta-D-glucuronate) + adenosine 3',5'-bisphosphate + H(+). It catalyses the reaction 3beta-androst-5-en-17-one 3-O-(beta-D-glucuronate) + 3'-phosphoadenylyl sulfate = 3beta-androst-5-en-17-one 3-O-(3-sulfo-beta-D-glucuronate) + adenosine 3',5'-bisphosphate + H(+). The enzyme catalyses 3alpha,17alpha-dihydroxy-5beta-androstane-11-one-17beta-carboxylate 3-O-(beta-D-glucuronate) + 3'-phosphoadenylyl sulfate = 3alpha,17alpha-dihydroxy-5beta-androstane-11-one-17beta-carboxylate 3-O-(3-sulfo-beta-D-glucuronate) + adenosine 3',5'-bisphosphate + H(+). It carries out the reaction 3alpha-hydroxyetiocholan-17-one 3-O-(beta-D-glucuronate) + 3'-phosphoadenylyl sulfate = 3alpha-hydroxyetiocholan-17-one 3-O-(3-sulfo-beta-D-glucuronate) + adenosine 3',5'-bisphosphate + H(+). It participates in steroid metabolism. The protein operates within protein modification; carbohydrate sulfation. Functionally, catalyzes the transfer of sulfate from 3'-phosphoadenylyl sulfate (PAPS) to position 3 of terminal glucuronic acid of both protein- and lipid-linked oligosaccharides. Participates in biosynthesis of HNK-1 carbohydrate structure 3-O-sulfo-beta-D-GlcA-(1-&gt;3)-beta-D-Gal-(1-&gt;4)-D-GlcNAc-R, a sulfated glucuronyl-lactosaminyl residue carried by many neural recognition molecules, which is involved in cell interactions during ontogenetic development and in synaptic plasticity in the adult. May be indirectly involved in synapse plasticity of the hippocampus, via its role in HNK-1 biosynthesis. Sulfates terminal glucuronyl residue of the laminin globular (LG)-domain binding epitope on DAG1/alpha-dystroglycan and prevents further polymerization by LARGE1 glycosyltransferase. Likely defines the chain length of LG epitope, conferring binding specificity to extracellular matrix components. Plays a role in down-regulating the steroid hormones. Sulfates glucuronidated estrogens and androgens with an impact in hormone cycle and fertility. Has a preference for glucuronyl moiety at the 3-hydroxyl group of a sterol ring rather than the 17-hydroxyl group, showing high catalytic efficiency for 17beta-estradiol 3-O-(beta-D-glucuronate) and dehydroepiandrosterone 3-O-(beta-D-glucuronate) hormones. This Homo sapiens (Human) protein is Carbohydrate sulfotransferase 10.